The chain runs to 392 residues: Glutamine synthetase (392 aa).

Residues 26-106 (VQVTYVWIDG…VMCEVLKYNR (81 aa)) form the GS beta-grasp domain. In terms of domain architecture, GS catalytic spans 113-392 (LRHTCKKIME…MASPRDAAVF (280 aa)). Residue glutamate 134 participates in ATP binding. Residues glutamate 134, glutamate 136, glutamate 196, and glutamate 203 each coordinate Mn(2+). Residue 203-208 (EFQVGP) coordinates ATP. Position 246–247 (246–247 (NW)) interacts with L-glutamate. A Mn(2+)-binding site is contributed by histidine 253. Residues 255-257 (NYS), arginine 319, and arginine 324 each bind ATP. Arginine 319 provides a ligand contact to L-glutamate. 336–338 (YFE) lines the ADP pocket. Mn(2+) is bound at residue glutamate 338. Arginine 340 serves as a coordination point for L-glutamate.

This sequence belongs to the glutamine synthetase family. Requires Mg(2+) as cofactor. Mn(2+) is required as a cofactor.

The protein localises to the cytoplasm. The protein resides in the cytosol. Its subcellular location is the microsome. It is found in the mitochondrion. The catalysed reaction is L-glutamate + NH4(+) + ATP = L-glutamine + ADP + phosphate + H(+). Glutamine synthetase that catalyzes the ATP-dependent conversion of glutamate and ammonia to glutamine. The sequence is that of Glutamine synthetase from Xenopus laevis (African clawed frog).